Consider the following 26-residue polypeptide: Hainantoxin F1-31.97 (26 aa).

2 disulfides stabilise this stretch: cysteine 2–cysteine 16 and cysteine 9–cysteine 21.

It belongs to the neurotoxin 10 (Hwtx-1) family. 17 (Hntx-9) subfamily. As to expression, expressed by the venom gland.

The protein localises to the secreted. In terms of biological role, ion channel inhibitor. The sequence is that of Hainantoxin F1-31.97 from Cyriopagopus hainanus (Chinese bird spider).